The sequence spans 1164 residues: Shugoshin 2A (1164 aa).

A coiled-coil region spans residues 62 to 113 (LSKEKENSRRITTEKMQLQKEVEKLNFENTFLRLKLNTLNKKLVEIESHVSN). Disordered stretches follow at residues 160–269 (SEND…VTMR), 287–314 (HQPT…NTQR), 390–492 (RKVK…PFSR), 521–541 (TFVI…DKDT), and 917–992 (PLDS…ETHG). Low complexity predominate over residues 182 to 198 (SKTSPDSTSSVSRQPSS). Polar residues-rich tracts occupy residues 238–247 (DQSPKSSLSE) and 288–299 (QPTSSPGSNWNN). The span at 390–412 (RKVKGASSDKKRESSKRECKDGS) shows a compositional bias: basic and acidic residues. Positions 443-472 (CISSTEQPSQVNTQKKRTLQNSSDQENIQN) are enriched in polar residues. The segment covering 525-541 (RKSEKDNLFPNQEDKDT) has biased composition (basic and acidic residues). The span at 934 to 948 (GEQTNLPKMQKQSAG) shows a compositional bias: polar residues. Ser1042 carries the phosphoserine modification. Positions 1092–1164 (ITTGTRNPHH…EPSLRSKMRR (73 aa)) are disordered. Residues 1112 to 1125 (TSLVLVDTSSVSDT) show a composition bias toward low complexity. Residues 1126-1140 (NPANPENESEGQSSH) are compositionally biased toward polar residues.

It belongs to the shugoshin family. As to quaternary structure, part of an astrin (SPAG5)-kinastrin (SKAP) complex containing KNSTRN, SPAG5, PLK1, DYNLL1 and SGO2A. Interacts with CDCA8. Interacts with PPP2CA. Ubiquitously expressed in proliferating cells. Highly expressed in the testis and oocytes.

It is found in the nucleus. It localises to the chromosome. The protein localises to the centromere. The protein resides in the kinetochore. In terms of biological role, cooperates with PPP2CA to protect centromeric cohesin from separase-mediated cleavage in oocytes specifically during meiosis I. Has a crucial role in protecting REC8 at centromeres from cleavage by separase. During meiosis, protects centromeric cohesion complexes until metaphase II/anaphase II transition, preventing premature release of meiosis-specific REC8 cohesin complexes from anaphase I centromeres. Is thus essential for an accurate gametogenesis. May act by targeting PPP2CA to centromeres, thus leading to cohesin dephosphorylation. Essential for recruiting KIF2C to the inner centromere and for correcting defective kinetochore attachments. Involved in centromeric enrichment of AUKRB in prometaphase. This chain is Shugoshin 2A, found in Mus musculus (Mouse).